A 173-amino-acid polypeptide reads, in one-letter code: Shikimate kinase 1 (173 aa).

14–19 (GAGKST) contributes to the ATP binding site. Serine 18 provides a ligand contact to Mg(2+). Substrate contacts are provided by aspartate 36, arginine 60, and glycine 82. Arginine 120 lines the ATP pocket. Arginine 140 is a substrate binding site. Glutamine 157 is a binding site for ATP.

Belongs to the shikimate kinase family. As to quaternary structure, monomer. It depends on Mg(2+) as a cofactor.

It is found in the cytoplasm. It catalyses the reaction shikimate + ATP = 3-phosphoshikimate + ADP + H(+). It participates in metabolic intermediate biosynthesis; chorismate biosynthesis; chorismate from D-erythrose 4-phosphate and phosphoenolpyruvate: step 5/7. Functionally, catalyzes the specific phosphorylation of the 3-hydroxyl group of shikimic acid using ATP as a cosubstrate. This Citrobacter koseri (strain ATCC BAA-895 / CDC 4225-83 / SGSC4696) protein is Shikimate kinase 1.